Consider the following 96-residue polypeptide: uncharacterized protein (96 aa).

3 consecutive transmembrane segments (helical) span residues 3–23 (KLTI…QLFA), 30–50 (TLGN…LASI), and 68–88 (IGLL…IIII).

It is found in the cell membrane. This is an uncharacterized protein from Bacillus subtilis (strain 168).